The chain runs to 645 residues: 1,4-alpha-glucan branching enzyme GlgB (645 aa).

The Nucleophile role is filled by aspartate 309. Glutamate 352 serves as the catalytic Proton donor. The tract at residues 619–645 (VKTRKGSKKQDGSKTKVRSNVTSRGKR) is disordered. A compositionally biased stretch (polar residues) spans 636 to 645 (RSNVTSRGKR).

Belongs to the glycosyl hydrolase 13 family. GlgB subfamily. Monomer.

It catalyses the reaction Transfers a segment of a (1-&gt;4)-alpha-D-glucan chain to a primary hydroxy group in a similar glucan chain.. The protein operates within glycan biosynthesis; glycogen biosynthesis. Functionally, catalyzes the formation of the alpha-1,6-glucosidic linkages in glycogen by scission of a 1,4-alpha-linked oligosaccharide from growing alpha-1,4-glucan chains and the subsequent attachment of the oligosaccharide to the alpha-1,6 position. The sequence is that of 1,4-alpha-glucan branching enzyme GlgB from Bacillus cereus (strain AH820).